Here is a 303-residue protein sequence, read N- to C-terminus: Sulfate adenylyltransferase subunit 2 (303 aa).

It belongs to the PAPS reductase family. CysD subfamily. Heterodimer composed of CysD, the smaller subunit, and CysN.

The enzyme catalyses sulfate + ATP + H(+) = adenosine 5'-phosphosulfate + diphosphate. It functions in the pathway sulfur metabolism; hydrogen sulfide biosynthesis; sulfite from sulfate: step 1/3. With CysN forms the ATP sulfurylase (ATPS) that catalyzes the adenylation of sulfate producing adenosine 5'-phosphosulfate (APS) and diphosphate, the first enzymatic step in sulfur assimilation pathway. APS synthesis involves the formation of a high-energy phosphoric-sulfuric acid anhydride bond driven by GTP hydrolysis by CysN coupled to ATP hydrolysis by CysD. This chain is Sulfate adenylyltransferase subunit 2, found in Sulfurimonas denitrificans (strain ATCC 33889 / DSM 1251) (Thiomicrospira denitrificans (strain ATCC 33889 / DSM 1251)).